The primary structure comprises 294 residues: G-protein coupled receptor homolog U51 (294 aa).

The Extracellular segment spans residues 1-14 (MKNIDLTNWKLLAE). A helical membrane pass occupies residues 15–35 (IYEYLFFFSFFFLCLLVIIVV). Topologically, residues 36-47 (KFNNSTVGREYT) are cytoplasmic. A helical transmembrane segment spans residues 48–68 (FSTFSGMLVYILLLPVKMGML). Residues 69–79 (TKMWDVSTDYC) are Extracellular-facing. Residues 80–102 (IILMFLSDFSFIFSSWALTLLAL) form a helical membrane-spanning segment. Topologically, residues 103-119 (ERINNFSFSEIKVNETK) are cytoplasmic. A helical transmembrane segment spans residues 120–140 (ILKQMSFPIIWVTSIFQAVQI). At 141-166 (SMKYKKSQMNLEDDYCLLAIERSAEE) the chain is on the extracellular side. A helical membrane pass occupies residues 167–187 (AWILLMYTVVIPTFIVFFYVL). At 188–200 (NKRFLFLERDLNS) the chain is on the cytoplasmic side. Residues 201-221 (IVTHLSLFLFFGALCFFPASV) form a helical membrane-spanning segment. Residues 222 to 236 (LNEFNCNRLFYGLHE) are Extracellular-facing. A helical membrane pass occupies residues 237–257 (LLIVCLELKIFYVPTMTYIIS). Topologically, residues 258–294 (CENYRLAAKAFFCKCFKPCFLMPSLRKLQQPTKSTQF) are cytoplasmic.

The protein belongs to the G-protein coupled receptor 1 family.

The protein resides in the host cell membrane. In Human herpesvirus 7 (strain JI) (HHV-7), this protein is G-protein coupled receptor homolog U51 (U51).